Reading from the N-terminus, the 582-residue chain is 15-cis-phytoene desaturase, chloroplastic/chromoplastic (582 aa).

The N-terminal 93 residues, 1–93, are a transit peptide targeting the chloroplast and chromoplast; sequence MNLLGSISTG…ELENTINFLE (93 aa). FAD-binding positions include alanine 121, 140–141, lysine 148, 165–166, and tyrosine 171; these read EA and HI. Residue arginine 306 coordinates substrate. Residue aspartate 537 participates in FAD binding. Alanine 545 serves as a coordination point for substrate. Methionine 547 serves as a coordination point for FAD.

The protein belongs to the carotenoid/retinoid oxidoreductase family. In terms of assembly, homotetramer. FAD serves as cofactor. In terms of tissue distribution, expressed in flower buds and lips. Lower expression in leaves and roots.

It is found in the plastid. The protein resides in the chloroplast. Its subcellular location is the chromoplast. The protein localises to the membrane. It carries out the reaction 2 a plastoquinone + 15-cis-phytoene = 9,9',15-tri-cis-zeta-carotene + 2 a plastoquinol. The protein operates within carotenoid biosynthesis; lycopene biosynthesis. Its function is as follows. Converts phytoene into zeta-carotene via the intermediary of phytofluene by the symmetrical introduction of two double bonds at the C-11 and C-11' positions of phytoene with a concomitant isomerization of two neighboring double bonds at the C9 and C9' positions from trans to cis. The chain is 15-cis-phytoene desaturase, chloroplastic/chromoplastic (PDS) from Oncidium hybrid cultivar (Orchid).